We begin with the raw amino-acid sequence, 329 residues long: MATGQKLMRAIRVFEFGGPEVLKLQSDVVVPAPQSHQVLIKVHACGVNPVETYIRSGTYSRKPALPYTPGSDVAGIIESVGDGVSAFKKGDRVFCFSTVSGGYAEFALSADNTTYPLPETLDFRQGAALGIPYFTACRALFHSARARAGESVLVHGASGGVGLATCQIARAHGLKVLGTAGSEEGKKLVLQNGAHEVFNHKEANYIDKIKTSAGDKGVDVIIEMLANKNLSNDLKLLSCGGRVIVVGCRGSIEINPRDTMAKETSIIGVSLFSSTKEEFQQFAGILQAGIEKGWVKPVIGSEYPLEKAAQAHEDIIHSSGKMGKMILLL.

At Ala2 the chain carries N-acetylalanine. Lys23 carries the post-translational modification N6-acetyllysine. NADP(+) is bound by residues Tyr53, 158–161 (SGGV), Gly181, His200, Asn229, 246–249 (VGCR), and 269–271 (VSL). Position 296 is an N6-succinyllysine (Lys296).

It belongs to the zinc-containing alcohol dehydrogenase family. Quinone oxidoreductase subfamily. As to quaternary structure, homotetramer.

It is found in the cytoplasm. It catalyses the reaction 2 a quinone + NADPH + H(+) = 2 a 1,4-benzosemiquinone + NADP(+). Its function is as follows. Does not have alcohol dehydrogenase activity. Binds NADP and acts through a one-electron transfer process. Orthoquinones, such as 1,2-naphthoquinone or 9,10-phenanthrenequinone, are the best substrates (in vitro). May act in the detoxification of xenobiotics. Interacts with (AU)-rich elements (ARE) in the 3'-UTR of target mRNA species and enhances their stability. NADPH binding interferes with mRNA binding. The protein is Quinone oxidoreductase (Cryz) of Rattus norvegicus (Rat).